Here is a 243-residue protein sequence, read N- to C-terminus: MRSRKLTGAVRSSARLKARSCSAARLASAQEVAGSTSAKTACLTSSSHKATDTRTSKKFKCDKGHLVKSELQKLVPKNDSASLPKVTPETPCENEFAEGSALLPGSEAGVSVQQGAASLPLGGCRVVSDSRLAKTRDGLSVPKHSAGSGAEESNSSSTVQKQNEPGLQTEDVQKPPLQMDNSVFLDDDSNQPMPVSRFFGNVELMQDLPPASSSCPSMSRREFRKMHFRAKDDDDDDDDDAEM.

Disordered regions lie at residues 78-100 (NDSA…AEGS) and 132-243 (LAKT…DAEM). The span at 145–157 (SAGSGAEESNSSS) shows a compositional bias: low complexity. A phosphoserine mark is found at serine 148 and serine 189. Positions 233–243 (DDDDDDDDAEM) are enriched in acidic residues.

It belongs to the UPF0688 family.

It is found in the nucleus. The protein is UPF0688 protein C1orf174 (C1orf174) of Homo sapiens (Human).